The sequence spans 575 residues: MDGDRGKRDSYWSTSPSGSTTKPASGWERSSKADTWLLILSFTQWALSIATVIICIIISARQGYSMKEYSMTVEALNMSSREVKESLTSLIRQEVIARAVNIQSSVQTGIPVLLNKNSRDVIQMIDKSCSRQELTQHCESTIAVHHADGIAPLEPHSFWRCPVGEPYLSSDPEISLLPGPSLLSGSTTISGCVRLPSLSIGEAIYAYSSNLITQGCADIGKSYQVLQLGYISLNSDMFPDLNPVVSHTYDINDNRKSCSVVATGTRGYQLCSMPTVDERTDYSSDGIEDLVLDVLDLKGRTKSHRYRNSEVDLDHPFSALYPSVGNGIATEGSLIFLGYGGLTTPLQGDTKCRTQGCQQVSQDTCNEALKITWLGGKQVVSVIIQVNDYLSERPKIRVTTIPITQNYLGAEGRLLKLGDRVYIYTRSSGWHSQLQIGVLDVSHPLTINWTPHEALSRPGNKECNWYNKCPKECISGVYTDAYPLSPDAANVATVTLYANTSRVNPTIMYSNTTNIINMLRIKDVQLEAAYTTTSCITHFGKGYCFHIIEINQKSLNTLQPMLFKTSIPKLCKAES.

The span at 1 to 10 shows a compositional bias: basic and acidic residues; the sequence is MDGDRGKRDS. Residues 1-27 are disordered; it reads MDGDRGKRDSYWSTSPSGSTTKPASGW. The Intravirion segment spans residues 1 to 37; sequence MDGDRGKRDSYWSTSPSGSTTKPASGWERSSKADTWL. The segment at 10-14 is incorporation in virion; that stretch reads SYWST. Residues 11–23 are compositionally biased toward polar residues; sequence YWSTSPSGSTTKP. A helical; Signal-anchor for type II membrane protein membrane pass occupies residues 38 to 58; the sequence is LILSFTQWALSIATVIICIII. Positions 59 to 140 are interaction with F protein; sequence SARQGYSMKE…RQELTQHCES (82 aa). Topologically, residues 59–575 are virion surface; it reads SARQGYSMKE…SIPKLCKAES (517 aa). A glycan (N-linked (GlcNAc...) asparagine; by host) is linked at asparagine 77. Cystine bridges form between cysteine 192–cysteine 216, cysteine 258–cysteine 271, cysteine 357–cysteine 469, and cysteine 463–cysteine 473. The interval 254 to 259 is involved in neuraminidase activity; that stretch reads NRKSCS. Residues asparagine 499 and asparagine 511 are each glycosylated (N-linked (GlcNAc...) asparagine; by host). Cysteine 535 and cysteine 544 are oxidised to a cystine.

The protein belongs to the paramyxoviruses hemagglutinin-neuraminidase family. In terms of assembly, homotetramer; composed of disulfide-linked homodimers. Interacts with F protein trimer. Post-translationally, N-glycosylated; glycans consist of a mixture of high mannose-type oligosaccharides and of complex-type oligosaccharides.

Its subcellular location is the virion membrane. The protein resides in the host cell membrane. The catalysed reaction is Hydrolysis of alpha-(2-&gt;3)-, alpha-(2-&gt;6)-, alpha-(2-&gt;8)- glycosidic linkages of terminal sialic acid residues in oligosaccharides, glycoproteins, glycolipids, colominic acid and synthetic substrates.. Functionally, attaches the virus to sialic acid-containing cell receptors and thereby initiating infection. Binding of HN protein to the receptor induces a conformational change that allows the F protein to trigger virion/cell membranes fusion. Its function is as follows. Neuraminidase activity ensures the efficient spread of the virus by dissociating the mature virions from the neuraminic acid containing glycoproteins. The polypeptide is Hemagglutinin-neuraminidase (HN) (Sendai virus (strain Z) (SeV)).